We begin with the raw amino-acid sequence, 780 residues long: Zinc finger protein GLIS3 (780 aa).

Polar residues-rich tracts occupy residues 80-92 and 106-115; these read PSLSSSHSSQNGT and VSGNSVSNSL. Disordered stretches follow at residues 80–148 and 290–315; these read PSLS…KKRA and PSALPLPLPPPQGPPPPYHAHPHLHH. Residues 135-148 show a composition bias toward basic residues; it reads SATRAHSTRSKKRA. Pro residues predominate over residues 293–308; sequence LPLPLPPPQGPPPPYH. The C2H2-type 1 zinc-finger motif lies at 345–370; sequence HCCRWIDCSALYDQQEELVRHIEKVH. A C2H2-type 2; atypical zinc finger spans residues 379 to 406; it reads FTCFWTGCPRRYKPFNARYKLLIHMRVH. C2H2-type zinc fingers lie at residues 412-436, 442-466, and 472-496; these read NKCTFEGCKKAFSRLENLKIHLRSH, YLCQHPGCQKAFSNSSDRAKHQRTH, and YACQIPGCTKRYTDPSSLRKHVKAH. Disordered regions lie at residues 485–512 and 527–670; these read DPSSLRKHVKAHSSREQQARKKLRSSTE and LQPA…QPNG. Residues 490 to 506 carry the Bipartite nuclear localization signal motif; sequence RKHVKAHSSREQQARKK. Over residues 497–512 the composition is skewed to basic and acidic residues; the sequence is SSREQQARKKLRSSTE. Residues 567–577 show a composition bias toward low complexity; it reads HSTRSGTAAGA. Polar residues predominate over residues 593-605; sequence VQGSPHNPSSQLP.

This sequence belongs to the GLI C2H2-type zinc-finger protein family. In terms of tissue distribution, in the embryo, expressed at high levels in the kidney and testis. In the adult, expressed at high levels in the kidney and uterus and at lower levels in the brain, lung, skeletal muscle and pancreas.

The protein localises to the nucleus. Functionally, acts both as a repressor and activator of transcription. Binds to the consensus sequence 5'-GACCACCCAC-3'. This is Zinc finger protein GLIS3 from Mus musculus (Mouse).